The sequence spans 566 residues: DNA ligase B (566 aa).

The active-site N6-AMP-lysine intermediate is the K125.

The protein belongs to the NAD-dependent DNA ligase family. LigB subfamily.

The enzyme catalyses NAD(+) + (deoxyribonucleotide)n-3'-hydroxyl + 5'-phospho-(deoxyribonucleotide)m = (deoxyribonucleotide)n+m + AMP + beta-nicotinamide D-nucleotide.. Its function is as follows. Catalyzes the formation of phosphodiester linkages between 5'-phosphoryl and 3'-hydroxyl groups in double-stranded DNA using NAD as a coenzyme and as the energy source for the reaction. The sequence is that of DNA ligase B from Pseudomonas putida (strain GB-1).